A 252-amino-acid polypeptide reads, in one-letter code: MLAKRIIAALDIKEGRVVKGIKFKNIRDAGDPIELARRYEKEGIDEIVFLDITASYEKRGILLDLVERIAEEIYVPFTVGGGIRTVEEAREIIKRGADKVFINTAAVDRPELVREIAQVVGTANLVIAIDAKWNGSFWEVYTHGGRKARGIDALEWARTVERLGAGEILLTSMDTDGTKMGFDIPLTKAVAEAVDIPVIASGGAGRPEHFYEAFKAGAEAALAASIFHYGEYTVGELKEFLAERGIPVRLDY.

Active-site residues include Asp11 and Asp130.

It belongs to the HisA/HisF family. In terms of assembly, heterodimer of HisH and HisF.

The protein localises to the cytoplasm. It catalyses the reaction 5-[(5-phospho-1-deoxy-D-ribulos-1-ylimino)methylamino]-1-(5-phospho-beta-D-ribosyl)imidazole-4-carboxamide + L-glutamine = D-erythro-1-(imidazol-4-yl)glycerol 3-phosphate + 5-amino-1-(5-phospho-beta-D-ribosyl)imidazole-4-carboxamide + L-glutamate + H(+). Its pathway is amino-acid biosynthesis; L-histidine biosynthesis; L-histidine from 5-phospho-alpha-D-ribose 1-diphosphate: step 5/9. In terms of biological role, IGPS catalyzes the conversion of PRFAR and glutamine to IGP, AICAR and glutamate. The HisF subunit catalyzes the cyclization activity that produces IGP and AICAR from PRFAR using the ammonia provided by the HisH subunit. The chain is Imidazole glycerol phosphate synthase subunit HisF from Thermococcus gammatolerans (strain DSM 15229 / JCM 11827 / EJ3).